Reading from the N-terminus, the 515-residue chain is Fatty acyl-CoA reductase 2 (515 aa).

Topologically, residues 1–464 (MSMIAAFYSN…KAKQHLRRLR (464 aa)) are cytoplasmic. Residues 465-484 (NIHYLFNTALFLIIWRLLIA) traverse the membrane as a helical segment. Residues 485–515 (RSQMARNVWFFIVSFCYKFISYFRASSTLKV) are Peroxisomal-facing.

It belongs to the fatty acyl-CoA reductase family. As to expression, specifically expressed in the meibomian glands of the eyelid and the sebaceous glands of the skin. Also expressed in the brain where large quantities of ether lipids are synthesized.

The protein localises to the peroxisome membrane. It catalyses the reaction a long-chain fatty acyl-CoA + 2 NADPH + 2 H(+) = a long-chain primary fatty alcohol + 2 NADP(+) + CoA. The enzyme catalyses hexadecanoyl-CoA + 2 NADPH + 2 H(+) = hexadecan-1-ol + 2 NADP(+) + CoA. The catalysed reaction is octadecanoyl-CoA + 2 NADPH + 2 H(+) = octadecan-1-ol + 2 NADP(+) + CoA. It carries out the reaction a very long-chain fatty acyl-CoA + 2 NADPH + 2 H(+) = a very long-chain primary fatty alcohol + 2 NADP(+) + CoA. It catalyses the reaction an ultra-long-chain fatty acyl-CoA + 2 NADPH + 2 H(+) = an ultra long-chain primary fatty alcohol + 2 NADP(+) + CoA. The enzyme catalyses eicosanoyl-CoA + 2 NADPH + 2 H(+) = eicosan-1-ol + 2 NADP(+) + CoA. The catalysed reaction is docosanoyl-CoA + 2 NADPH + 2 H(+) = docosan-1-ol + 2 NADP(+) + CoA. It carries out the reaction tetracosanoyl-CoA + 2 NADPH + 2 H(+) = tetracosan-1-ol + 2 NADP(+) + CoA. It catalyses the reaction hexacosanoyl-CoA + 2 NADPH + 2 H(+) = hexacosan-1-ol + 2 NADP(+) + CoA. The enzyme catalyses octacosanoyl-CoA + 2 NADPH + 2 H(+) = octacosan-1-ol + 2 NADP(+) + CoA. The catalysed reaction is triacontanoyl-CoA + 2 NADPH + 2 H(+) = triacontan-1-ol + 2 NADP(+) + CoA. It carries out the reaction 18-methylnonadecanoyl-CoA + 2 NADPH + 2 H(+) = 18-methylnonadecan-1-ol + 2 NADP(+) + CoA. It catalyses the reaction 20-methylheneicosanoyl-CoA + 2 NADPH + 2 H(+) = 20-methylheneicosan-1-ol + 2 NADP(+) + CoA. The enzyme catalyses 22-methyltricosanoyl-CoA + 2 NADPH + 2 H(+) = 22-methyltricosan-1-ol + 2 NADP(+) + CoA. The catalysed reaction is 24-methylpentacosanoyl-CoA + 2 NADPH + 2 H(+) = 24-methylpentacosan-1-ol + 2 NADP(+) + CoA. Catalyzes the reduction of saturated but not unsaturated C16 or C18 fatty acyl-CoA to fatty alcohols. A lower activity can be observed with shorter fatty acyl-CoA substrates. Can produce very long-chain and ultra long-chain FAls, regardless of whether they have a straight or branched chain. It may play a role in the production of ether lipids/plasmalogens and wax monoesters which synthesis requires fatty alcohols as substrates. In Mus musculus (Mouse), this protein is Fatty acyl-CoA reductase 2.